Reading from the N-terminus, the 184-residue chain is GTP-binding protein Rheb (184 aa).

Residue lysine 8 forms a Glycyl lysine isopeptide (Lys-Gly) (interchain with G-Cter in ubiquitin) linkage. Residues serine 16, valine 17, glycine 18, lysine 19, serine 20, serine 21, valine 32, and aspartate 33 each coordinate GDP. Serine 16 contacts GTP. Glycine 18, lysine 19, serine 20, serine 21, and valine 32 together coordinate GTP. Position 20 (serine 20) interacts with Mg(2+). Residues tyrosine 35, threonine 38, asparagine 119, and aspartate 122 each contribute to the GTP site. The Effector region motif lies at 35–43; that stretch reads YDPTIENTF. Position 38 (threonine 38) interacts with Mg(2+). GDP-binding residues include asparagine 119 and aspartate 122. Serine 130 carries the post-translational modification Phosphoserine; by MAPKAPK5. Alanine 150 contributes to the GDP binding site. GTP is bound at residue alanine 150. Cysteine 181 carries the post-translational modification Cysteine methyl ester. Cysteine 181 carries the S-farnesyl cysteine lipid modification. The propeptide at 182–184 is removed in mature form; the sequence is SVM.

This sequence belongs to the small GTPase superfamily. Rheb family. Associates with the mTORC1 complex (MTOR, MLST8 and RPTOR) in a guanyl nucleotide-independent manner. Interacts with TSC2. Interacts with MCRS1; the interaction maintains RHEB at the lysosome in its active GTP-bound form and prevents its interaction with the mTORC1 complex inhibitor TSC2, ensuring activation of the mTORC1 complex by RHEB. Interacts (when prenylated) with PDE6D; this promotes release from membranes. In terms of processing, farnesylation is important for efficiently activating mTORC1-mediated signaling. Polyubiquitinated in response to amino acid, promoting its interaction with MTOR and mTORC1 activation. Deubiquitination by ATXN3 promotes recruitment of the TSC-TBC complex and RHEB inactivation by TSC2. Monoubiquitinated at Lys-8 by RNF152, promoting its association with the TSC-TBC complex. Deubiquitinated at Lys-8 by USP4, promoting mTORC1 activation. Post-translationally, phosphorylation by MAPKAPK5 impairs GTP-binding and inactivation. Ubiquitous. Highest levels observed in skeletal and cardiac muscle.

The protein localises to the endomembrane system. It localises to the lysosome membrane. It is found in the golgi apparatus membrane. Its subcellular location is the endoplasmic reticulum membrane. The protein resides in the cytoplasm. The protein localises to the cytosol. The catalysed reaction is GTP + H2O = GDP + phosphate + H(+). With respect to regulation, alternates between an inactive form bound to GDP and an active form bound to GTP. Inactivated by the TSC-TBC complex via the GTPase activating protein (GAP) domain of TSC2. Autoinhibited by Tyr-35, which constrains the active site conformation, restricting the access of the catalytic Asp-65 to the nucleotide-binding pocket. Specifically inhibited by NR1 (4-bromo-6-(3,4-dichlorophenylthio)-1-(4-(dimethylcarbamoyl)benzyl)-1H-indole-2-carboxylic acid). In terms of biological role, small GTPase that acts as an allosteric activator of the canonical mTORC1 complex, an evolutionarily conserved central nutrient sensor that stimulates anabolic reactions and macromolecule biosynthesis to promote cellular biomass generation and growth. In response to nutrients, growth factors or amino acids, specifically activates the protein kinase activity of MTOR, the catalytic component of the mTORC1 complex: acts by causing a conformational change that allows the alignment of residues in the active site of MTOR, thereby enhancing the phosphorylation of ribosomal protein S6 kinase (RPS6KB1 and RPS6KB2) and EIF4EBP1 (4E-BP1). RHEB is also required for localization of the TSC-TBC complex to lysosomal membranes. In response to starvation, RHEB is inactivated by the TSC-TBC complex, preventing activation of mTORC1. Has low intrinsic GTPase activity. The polypeptide is GTP-binding protein Rheb (Homo sapiens (Human)).